A 473-amino-acid polypeptide reads, in one-letter code: Sulfate adenylyltransferase subunit 1 (473 aa).

The tr-type G domain occupies 19-238 (KTLLKFLTCG…IKIKNSISSE (220 aa)). The interval 28–35 (GSVDDGKS) is G1. Residue 28 to 35 (GSVDDGKS) participates in GTP binding. The segment at 86-90 (GITID) is G2. The G3 stretch occupies residues 107–110 (DTPG). Residues 107–111 (DTPGH) and 162–165 (NKMD) each bind GTP. The segment at 162 to 165 (NKMD) is G4. A G5 region spans residues 200 to 202 (SAL).

The protein belongs to the TRAFAC class translation factor GTPase superfamily. Classic translation factor GTPase family. CysN/NodQ subfamily. Heterodimer composed of CysD, the smaller subunit, and CysN.

It carries out the reaction sulfate + ATP + H(+) = adenosine 5'-phosphosulfate + diphosphate. It functions in the pathway sulfur metabolism; hydrogen sulfide biosynthesis; sulfite from sulfate: step 1/3. With CysD forms the ATP sulfurylase (ATPS) that catalyzes the adenylation of sulfate producing adenosine 5'-phosphosulfate (APS) and diphosphate, the first enzymatic step in sulfur assimilation pathway. APS synthesis involves the formation of a high-energy phosphoric-sulfuric acid anhydride bond driven by GTP hydrolysis by CysN coupled to ATP hydrolysis by CysD. This chain is Sulfate adenylyltransferase subunit 1, found in Buchnera aphidicola subsp. Acyrthosiphon pisum (strain 5A).